Here is a 63-residue protein sequence, read N- to C-terminus: Large ribosomal subunit protein uL29 (63 aa).

It belongs to the universal ribosomal protein uL29 family.

In Vibrio campbellii (strain ATCC BAA-1116), this protein is Large ribosomal subunit protein uL29.